Reading from the N-terminus, the 385-residue chain is MTKSVDTLLIPGPIILSGAVQKALDVPSLGHTSPEFVSIFQRVLKNTRAVFKSAAASKSQPFVLAGSGTLGWDIFASNFILSKAPNKNVLVVSTGTFSDRFADCLRSYGAQVDVVRPLKIGESVPLELITEKLSQNSYGAVTVTHVDTSTAVLSDLKAISQAIKQTSPETFFVVDAVCSIGCEEFEFDEWGVDFALTASQKAIGAPAGLSISLCSSRFMDYALNDSKNGHVHGYFSSLRRWTPIMENYEAGKGAYFATPPVQLINSLDVALKEILEEGLHKRWDLHREMSDWFKDSLVNGLQLTSVSRYPSNMSAHGLTAVYVADPPDVIAFLKSHGVVIAGGIHKDIGPKYIRIGHMGVTACNKNLPYMKNCFDLIKLALQRKK.

Position 201 is an N6-(pyridoxal phosphate)lysine (Lys201). Position 354 (Arg354) interacts with substrate.

Belongs to the class-V pyridoxal-phosphate-dependent aminotransferase family. Homodimer. The cofactor is pyridoxal 5'-phosphate.

The catalysed reaction is glyoxylate + L-alanine = glycine + pyruvate. The protein operates within amino-acid biosynthesis; glycine biosynthesis; glycine from glyoxylate: step 1/1. Its function is as follows. Has alanine:glyoxylate aminotransferase activity. This is Alanine--glyoxylate aminotransferase 1 from Saccharomyces cerevisiae (strain ATCC 204508 / S288c) (Baker's yeast).